The primary structure comprises 265 residues: Small ribosomal subunit protein uS3 (265 aa).

Residues 39–107 (VRDFLKKKLK…PVHVNIEEIR (69 aa)) form the KH type-2 domain. The segment at 211 to 265 (NDAPVVEEPQDDRRRRPGRPEGRRREGEGRPGGNRRGGAGAGRRAAPGADAKSGE) is disordered. Basic and acidic residues predominate over residues 221-239 (DDRRRRPGRPEGRRREGEG). The segment covering 240-251 (RPGGNRRGGAGA) has biased composition (gly residues).

It belongs to the universal ribosomal protein uS3 family. Part of the 30S ribosomal subunit. Forms a tight complex with proteins S10 and S14.

Functionally, binds the lower part of the 30S subunit head. Binds mRNA in the 70S ribosome, positioning it for translation. This Cupriavidus necator (strain ATCC 17699 / DSM 428 / KCTC 22496 / NCIMB 10442 / H16 / Stanier 337) (Ralstonia eutropha) protein is Small ribosomal subunit protein uS3.